The following is a 65-amino-acid chain: Small ribosomal subunit protein bS21 (65 aa).

The span at 33-42 shows a compositional bias: basic and acidic residues; sequence RRREHYEKPS. Positions 33 to 65 are disordered; the sequence is RRREHYEKPSVKRKRKEAARLRKLQKMAREANN. Basic residues predominate over residues 43 to 58; sequence VKRKRKEAARLRKLQK.

This sequence belongs to the bacterial ribosomal protein bS21 family.

The protein is Small ribosomal subunit protein bS21 of Herpetosiphon aurantiacus (strain ATCC 23779 / DSM 785 / 114-95).